We begin with the raw amino-acid sequence, 361 residues long: Queuine tRNA-ribosyltransferase (361 aa).

The active-site Proton acceptor is Asp-92. Residues 92–96 (DSGGF), Asp-146, Gln-189, and Gly-216 contribute to the substrate site. The segment at 247–253 (GVGKPAD) is RNA binding. Catalysis depends on Asp-266, which acts as the Nucleophile. The segment at 271–275 (TRSGR) is RNA binding; important for wobble base 34 recognition. Zn(2+) contacts are provided by Cys-304, Cys-306, Cys-309, and His-335.

It belongs to the queuine tRNA-ribosyltransferase family. Homodimer. Within each dimer, one monomer is responsible for RNA recognition and catalysis, while the other monomer binds to the replacement base PreQ1. The cofactor is Zn(2+).

It catalyses the reaction 7-aminomethyl-7-carbaguanine + guanosine(34) in tRNA = 7-aminomethyl-7-carbaguanosine(34) in tRNA + guanine. The protein operates within tRNA modification; tRNA-queuosine biosynthesis. Its function is as follows. Catalyzes the base-exchange of a guanine (G) residue with the queuine precursor 7-aminomethyl-7-deazaguanine (PreQ1) at position 34 (anticodon wobble position) in tRNAs with GU(N) anticodons (tRNA-Asp, -Asn, -His and -Tyr). Catalysis occurs through a double-displacement mechanism. The nucleophile active site attacks the C1' of nucleotide 34 to detach the guanine base from the RNA, forming a covalent enzyme-RNA intermediate. The proton acceptor active site deprotonates the incoming PreQ1, allowing a nucleophilic attack on the C1' of the ribose to form the product. After dissociation, two additional enzymatic reactions on the tRNA convert PreQ1 to queuine (Q), resulting in the hypermodified nucleoside queuosine (7-(((4,5-cis-dihydroxy-2-cyclopenten-1-yl)amino)methyl)-7-deazaguanosine). The polypeptide is Queuine tRNA-ribosyltransferase (Rickettsia felis (strain ATCC VR-1525 / URRWXCal2) (Rickettsia azadi)).